The sequence spans 29 residues: uncharacterized protein (29 aa).

This is an uncharacterized protein from Haloarcula hispanica (His1V).